The following is a 387-amino-acid chain: Radial spoke protein 14 (387 aa).

8 ARM repeats span residues 24-67 (KALP…ELLS), 69-109 (PVNH…LLAA), 111-150 (EVGA…EAAR), 154-198 (TRRA…TCTQ), 204-244 (GILS…ALAT), 245-286 (REDA…AITI), 289-328 (EGKY…NVAE), and 330-370 (PEAR…QCRF).

This sequence belongs to the flagellar radial spoke RSP14 family.

Its subcellular location is the cytoplasm. The protein resides in the cytoskeleton. It is found in the flagellum axoneme. In Chlamydomonas reinhardtii (Chlamydomonas smithii), this protein is Radial spoke protein 14 (RSP14).